Consider the following 451-residue polypeptide: Exodeoxyribonuclease 7 large subunit (451 aa).

Belongs to the XseA family. Heterooligomer composed of large and small subunits.

Its subcellular location is the cytoplasm. It catalyses the reaction Exonucleolytic cleavage in either 5'- to 3'- or 3'- to 5'-direction to yield nucleoside 5'-phosphates.. In terms of biological role, bidirectionally degrades single-stranded DNA into large acid-insoluble oligonucleotides, which are then degraded further into small acid-soluble oligonucleotides. The polypeptide is Exodeoxyribonuclease 7 large subunit (Neisseria meningitidis serogroup C / serotype 2a (strain ATCC 700532 / DSM 15464 / FAM18)).